We begin with the raw amino-acid sequence, 359 residues long: uncharacterized protein (359 aa).

Residues Ala-73–Ala-88 show a composition bias toward low complexity. The interval Ala-73–Ala-93 is disordered. In terms of domain architecture, Macro spans Pro-179–Glu-354.

This is an uncharacterized protein from Mycobacterium tuberculosis (strain ATCC 25618 / H37Rv).